The sequence spans 317 residues: Transcriptional regulator LsrR (317 aa).

The segment at residues 33-56 (QSEISDRLGLTRLKVSRLLEKGHQ) is a DNA-binding region (H-T-H motif).

This sequence belongs to the SorC transcriptional regulatory family.

Its subcellular location is the cytoplasm. With respect to regulation, inactivated by phosphorylated autoinducer-2 (phospho-AI-2). Phospho-AI-2 acts by binding to LsrR, which is then unable to bind to the promoter regions, allowing the transcription of the target genes. Its function is as follows. Transcriptional regulator that represses the expression of the lsr operon in the absence of the quorum-sensing signaling molecule autoinducer 2 (AI-2). It also represses the expression of the lsrRK operon. Acts by binding directly to the lsrA and lsrR promoter regions. In the presence of phosphorylated autoinducer-2 (phospho-AI-2), LsrR is inactivated, leading to the transcription of the genes. In Escherichia coli O139:H28 (strain E24377A / ETEC), this protein is Transcriptional regulator LsrR (lsrR).